Here is a 365-residue protein sequence, read N- to C-terminus: tRNA/tmRNA (uracil-C(5))-methyltransferase (365 aa).

S-adenosyl-L-methionine-binding residues include Q196, Y224, N229, E245, and D298. Residue C323 is the Nucleophile of the active site. E357 serves as the catalytic Proton acceptor.

This sequence belongs to the class I-like SAM-binding methyltransferase superfamily. RNA M5U methyltransferase family. TrmA subfamily.

It carries out the reaction uridine(54) in tRNA + S-adenosyl-L-methionine = 5-methyluridine(54) in tRNA + S-adenosyl-L-homocysteine + H(+). The catalysed reaction is uridine(341) in tmRNA + S-adenosyl-L-methionine = 5-methyluridine(341) in tmRNA + S-adenosyl-L-homocysteine + H(+). Its function is as follows. Dual-specificity methyltransferase that catalyzes the formation of 5-methyluridine at position 54 (m5U54) in all tRNAs, and that of position 341 (m5U341) in tmRNA (transfer-mRNA). This Nautilia profundicola (strain ATCC BAA-1463 / DSM 18972 / AmH) protein is tRNA/tmRNA (uracil-C(5))-methyltransferase.